A 324-amino-acid chain; its full sequence is MSTLSTKEPLAAIVGPTATGKSTIALKVAARLGAEIISVDSAQVYRGMDIGTAKLLPEERVGPDGRPIPHHLIDIVDPDEPFSVADYQKLARQTITAIIRRGHLPLLVGGTGLYYQAVVDPYRFTPEGGDPRVRQELEELAAKFGDAYLHEQLKRVDPEAAKRIHPHDRRRLVRALEVFKTTGQPISAALAWRRQQESPYHLAAVALSMPRPLLYRRIEARVDAMIAAGLIEEVSRLLARYDYRLPALQALGYKEIGAYLRKEIELEEAIAILKRNTRRLAKRQLTWFRRDRRLHWWEVDPDKIEEISAAIADFISRTIDINVE.

Position 15-22 (15-22 (GPTATGKS)) interacts with ATP. Residue 17–22 (TATGKS) coordinates substrate. The interaction with substrate tRNA stretch occupies residues 40 to 43 (DSAQ).

It belongs to the IPP transferase family. As to quaternary structure, monomer. It depends on Mg(2+) as a cofactor.

The catalysed reaction is adenosine(37) in tRNA + dimethylallyl diphosphate = N(6)-dimethylallyladenosine(37) in tRNA + diphosphate. In terms of biological role, catalyzes the transfer of a dimethylallyl group onto the adenine at position 37 in tRNAs that read codons beginning with uridine, leading to the formation of N6-(dimethylallyl)adenosine (i(6)A). This chain is tRNA dimethylallyltransferase, found in Moorella thermoacetica (strain ATCC 39073 / JCM 9320).